The chain runs to 869 residues: Rho GTPase-activating protein 27 (869 aa).

Residues 6–69 enclose the SH3 domain; that stretch reads EGDVYVLVEH…PAQYVRELPA (64 aa). Residues 104–137 form a disordered region; that stretch reads GADGSSAEPRGRASSLCGPARQRTSGQRNSLAPG. A phosphoserine mark is found at serine 155, serine 215, and serine 249. WW domains lie at 246–280 and 299–333; these read PRLSPVWETHTDAGTGRPYYYNPDTGVTTWESPFE and ESLETEWGQYWDEESGRVFFYNPLTGETVWEDETE. 3 disordered regions span residues 275-299, 331-389, and 447-474; these read WESPFEAPEGATSPTTSRASVGSGE, ETEE…DLGP, and VPVPAPRSGRKSSQDSDTPAQASPPEEK. A compositionally biased stretch (acidic residues) spans 331–343; sequence ETEELEDDPEEQL. The segment covering 345–356 has biased composition (polar residues); it reads MQPSLSPRSPGQ. Phosphoserine is present on serine 350. The region spanning 414–447 is the WW 3 domain; the sequence is QFTQEQWVRLEDQEGKPYFYNPEDSSVQWELPQV. Phosphoserine is present on residues serine 459 and serine 462. A Phosphothreonine modification is found at threonine 464. Serine 469 carries the post-translational modification Phosphoserine. Positions 477-593 constitute a PH domain; the sequence is TLDKAGVLHR…WHKAIAEGIE (117 aa). The interval 598–644 is disordered; that stretch reads DLPQREEGEPSSADFGSSERLGSWKEEDVRPNAASPSLNPGSQESDL. The span at 631 to 642 shows a compositional bias: polar residues; that stretch reads ASPSLNPGSQES. Position 632 is a phosphoserine (serine 632). Residues 677 to 866 enclose the Rho-GAP domain; it reads CALAQLCERE…LILHQCADIF (190 aa).

Interacts with SH3KBP1/CIN85.

Its subcellular location is the cytoplasm. The protein localises to the membrane. In terms of biological role, rho GTPase-activating protein which may be involved in clathrin-mediated endocytosis. GTPase activators for the Rho-type GTPases act by converting them to an inactive GDP-bound state. Has activity toward CDC42 and RAC1. In Rattus norvegicus (Rat), this protein is Rho GTPase-activating protein 27 (Arhgap27).